The sequence spans 433 residues: 5-methylthioadenosine/S-adenosylhomocysteine deaminase (433 aa).

Positions 67 and 69 each coordinate Zn(2+). Substrate is bound by residues E96, R148, and H186. H213 is a Zn(2+) binding site. Substrate is bound by residues E216 and D301. D301 serves as a coordination point for Zn(2+).

It belongs to the metallo-dependent hydrolases superfamily. MTA/SAH deaminase family. Zn(2+) serves as cofactor.

The enzyme catalyses S-adenosyl-L-homocysteine + H2O + H(+) = S-inosyl-L-homocysteine + NH4(+). It carries out the reaction S-methyl-5'-thioadenosine + H2O + H(+) = S-methyl-5'-thioinosine + NH4(+). Functionally, catalyzes the deamination of 5-methylthioadenosine and S-adenosyl-L-homocysteine into 5-methylthioinosine and S-inosyl-L-homocysteine, respectively. Is also able to deaminate adenosine. In Desulforamulus reducens (strain ATCC BAA-1160 / DSM 100696 / MI-1) (Desulfotomaculum reducens), this protein is 5-methylthioadenosine/S-adenosylhomocysteine deaminase.